Reading from the N-terminus, the 126-residue chain is Large ribosomal subunit protein bL12 (126 aa).

Over residues 107 to 116 the composition is skewed to basic and acidic residues; that stretch reads EDAEKAKSQL. A disordered region spans residues 107–126; it reads EDAEKAKSQLEEAGATVELK.

The protein belongs to the bacterial ribosomal protein bL12 family. In terms of assembly, homodimer. Part of the ribosomal stalk of the 50S ribosomal subunit. Forms a multimeric L10(L12)X complex, where L10 forms an elongated spine to which 2 to 4 L12 dimers bind in a sequential fashion. Binds GTP-bound translation factors.

Forms part of the ribosomal stalk which helps the ribosome interact with GTP-bound translation factors. Is thus essential for accurate translation. This Bifidobacterium adolescentis (strain ATCC 15703 / DSM 20083 / NCTC 11814 / E194a) protein is Large ribosomal subunit protein bL12.